A 673-amino-acid polypeptide reads, in one-letter code: Methionine--tRNA ligase (673 aa).

Residues 14–24 (YYPSGKLHIGN) carry the 'HIGH' region motif. The 'KMSKS' region signature appears at 310–314 (KMSKS). Residue K313 participates in ATP binding. One can recognise a tRNA-binding domain in the interval 571 to 673 (VFDKVELKVA…SEAPNGSSIS (103 aa)).

This sequence belongs to the class-I aminoacyl-tRNA synthetase family. MetG type 2B subfamily. Homodimer.

It is found in the cytoplasm. It carries out the reaction tRNA(Met) + L-methionine + ATP = L-methionyl-tRNA(Met) + AMP + diphosphate. In terms of biological role, is required not only for elongation of protein synthesis but also for the initiation of all mRNA translation through initiator tRNA(fMet) aminoacylation. The polypeptide is Methionine--tRNA ligase (metG) (Oceanobacillus iheyensis (strain DSM 14371 / CIP 107618 / JCM 11309 / KCTC 3954 / HTE831)).